A 4568-amino-acid chain; its full sequence is Dynein beta chain, flagellar outer arm (4568 aa).

The segment at 1-1880 (MAEDEGMTAA…QVNICDAEIA (1880 aa)) is stem. Coiled coils occupy residues 277–293 (FQRLFREVEAAQQEAND), 1158–1175 (EEAAAKKAAEEEEKRKAL), 1372–1400 (KIDVDFLVEETKKLSKDIKMLNKAVRNYD), 1614–1650 (EACTLDGRQERLENMQSMLEQCEKALQEYLETKRVAF), and 1778–1825 (QEIN…RKKL). Residues 1144 to 1166 (GVEEEPEYHPDQDPEEAAAKKAA) are disordered. A compositionally biased stretch (basic and acidic residues) spans 1150-1166 (EYHPDQDPEEAAAKKAA). AAA stretches follow at residues 1881 to 2102 (YSYE…TLYV), 2164 to 2385 (EAAH…RNFK), 2493 to 2738 (QYIP…ITQG), and 2841 to 3090 (EYNE…FRRY). Residues 1919–1926 (GPAGTGKT), 2202–2209 (GAAGCGKT), and 2530–2537 (GNTGTGKS) contribute to the ATP site. Positions 2831–2848 (LRKTLEDKLREYNESNAV) form a coiled coil. 2879–2886 (GVGGSGKQ) is an ATP binding site. Coiled coils occupy residues 3106 to 3162 (KMLL…DELI), 3339 to 3425 (KRAA…RLES), and 3648 to 3728 (HERP…KARE). A stalk region spans residues 3106–3425 (KMLLQLKRDD…WGAEIKRLES (320 aa)). AAA stretches follow at residues 3481 to 3711 (LTDD…EIEE) and 3937 to 4172 (MGRF…TANN).

The protein belongs to the dynein heavy chain family. Consists of at least 3 heavy chains (alpha, beta and gamma), 2 intermediate chains and 8 light chains.

Its subcellular location is the cell projection. It is found in the cilium. It localises to the flagellum. The protein localises to the cytoplasm. The protein resides in the cytoskeleton. Its subcellular location is the flagellum axoneme. In terms of biological role, force generating protein of eukaryotic cilia and flagella. Produces force towards the minus ends of microtubules. Dynein has ATPase activity; the force-producing power stroke is thought to occur on release of ADP. The chain is Dynein beta chain, flagellar outer arm (ODA4) from Chlamydomonas reinhardtii (Chlamydomonas smithii).